The primary structure comprises 203 residues: Cytochrome c oxidase assembly protein CtaG (203 aa).

The Cytoplasmic segment spans residues methionine 1–arginine 19. A helical; Signal-anchor for type II membrane protein membrane pass occupies residues arginine 20–serine 42. At valine 43–glycine 203 the chain is on the periplasmic side.

The protein belongs to the COX11/CtaG family.

The protein resides in the cell inner membrane. Its function is as follows. Exerts its effect at some terminal stage of cytochrome c oxidase synthesis, probably by being involved in the insertion of the copper B into subunit I. The protein is Cytochrome c oxidase assembly protein CtaG of Xanthobacter autotrophicus (strain ATCC BAA-1158 / Py2).